The following is a 451-amino-acid chain: Tubulin alpha-2 chain (451 aa).

Gln-11 is a binding site for GTP. Residue Lys-40 is modified to N6-acetyllysine. Positions 71, 144, 145, 179, 206, and 228 each coordinate GTP. Residue Glu-71 coordinates Mg(2+). Glu-254 is a catalytic residue.

Belongs to the tubulin family. As to quaternary structure, dimer of alpha and beta chains. A typical microtubule is a hollow water-filled tube with an outer diameter of 25 nm and an inner diameter of 15 nM. Alpha-beta heterodimers associate head-to-tail to form protofilaments running lengthwise along the microtubule wall with the beta-tubulin subunit facing the microtubule plus end conferring a structural polarity. Microtubules usually have 13 protofilaments but different protofilament numbers can be found in some organisms and specialized cells. Requires Mg(2+) as cofactor. Post-translationally, undergoes a tyrosination/detyrosination cycle, the cyclic removal and re-addition of a C-terminal tyrosine residue by the enzymes tubulin tyrosine carboxypeptidase (TTCP) and tubulin tyrosine ligase (TTL), respectively. Acetylation of alpha chains at Lys-40 stabilizes microtubules and affects affinity and processivity of microtubule motors. This modification has a role in multiple cellular functions, ranging from cell motility, cell cycle progression or cell differentiation to intracellular trafficking and signaling.

Its subcellular location is the cytoplasm. The protein resides in the cytoskeleton. It catalyses the reaction GTP + H2O = GDP + phosphate + H(+). Its function is as follows. Tubulin is the major constituent of microtubules, a cylinder consisting of laterally associated linear protofilaments composed of alpha- and beta-tubulin heterodimers. Microtubules grow by the addition of GTP-tubulin dimers to the microtubule end, where a stabilizing cap forms. Below the cap, tubulin dimers are in GDP-bound state, owing to GTPase activity of alpha-tubulin. In Zea mays (Maize), this protein is Tubulin alpha-2 chain (TUBA2).